The primary structure comprises 217 residues: Vesicle transport through interaction with t-SNAREs homolog 1A (217 aa).

The Cytoplasmic portion of the chain corresponds to 1–192; it reads MSSDFEGYEQ…GMLRRIIQNR (192 aa). 2 coiled-coil regions span residues 31-92 and 112-178; these read PDEK…KRSR and ENQR…GKSS. A helical membrane pass occupies residues 193-213; that stretch reads ILLVILGIIVVITILMAITFS. At 214–217 the chain is on the extracellular side; the sequence is VRRH.

The protein belongs to the VTI1 family. Interacts with distinct SNARE complexes that contain either STX5 or STX6. Interacts with NAPA and, to a lesser extent, with NAPG. Identified in a complex containing STX6, STX12, VAMP4 and VTI1A.

The protein resides in the cytoplasmic vesicle. It localises to the golgi apparatus membrane. In terms of biological role, V-SNARE that mediates vesicle transport pathways through interactions with t-SNAREs on the target membrane. These interactions are proposed to mediate aspects of the specificity of vesicle trafficking and to promote fusion of the lipid bilayers. Involved in vesicular transport from the late endosomes to the trans-Golgi network. Along with VAMP7, involved in an non-conventional RAB1-dependent traffic route to the cell surface used by KCNIP1 and KCND2. May be involved in increased cytokine secretion associated with cellular senescence. In Homo sapiens (Human), this protein is Vesicle transport through interaction with t-SNAREs homolog 1A (VTI1A).